A 35-amino-acid chain; its full sequence is Beta-theraphotoxin-Hlv1a (35 aa).

3 disulfides stabilise this stretch: C2–C17, C9–C24, and C16–C31.

Belongs to the neurotoxin 10 (Hwtx-1) family. 10 (haplotoxin-1) subfamily. As to expression, expressed by the venom gland.

Its subcellular location is the secreted. Spider venom neurotoxin that blocks voltage-gated sodium channel Nav1.3/SCN3A in human (IC(50)=1 uM) and rat (IC(50)=1 uM). The polypeptide is Beta-theraphotoxin-Hlv1a (Cyriopagopus lividus (Cobalt blue tarantula)).